The chain runs to 292 residues: 33 kDa chaperonin (292 aa).

2 disulfides stabilise this stretch: cysteine 238-cysteine 240 and cysteine 271-cysteine 274.

The protein belongs to the HSP33 family. Under oxidizing conditions two disulfide bonds are formed involving the reactive cysteines. Under reducing conditions zinc is bound to the reactive cysteines and the protein is inactive.

It is found in the cytoplasm. Functionally, redox regulated molecular chaperone. Protects both thermally unfolding and oxidatively damaged proteins from irreversible aggregation. Plays an important role in the bacterial defense system toward oxidative stress. This Latilactobacillus sakei subsp. sakei (strain 23K) (Lactobacillus sakei subsp. sakei) protein is 33 kDa chaperonin.